The following is a 389-amino-acid chain: Anhydro-N-acetylmuramic acid kinase (389 aa).

11 to 18 (GTSLDGVD) serves as a coordination point for ATP.

The protein belongs to the anhydro-N-acetylmuramic acid kinase family.

It catalyses the reaction 1,6-anhydro-N-acetyl-beta-muramate + ATP + H2O = N-acetyl-D-muramate 6-phosphate + ADP + H(+). It functions in the pathway amino-sugar metabolism; 1,6-anhydro-N-acetylmuramate degradation. Its pathway is cell wall biogenesis; peptidoglycan recycling. In terms of biological role, catalyzes the specific phosphorylation of 1,6-anhydro-N-acetylmuramic acid (anhMurNAc) with the simultaneous cleavage of the 1,6-anhydro ring, generating MurNAc-6-P. Is required for the utilization of anhMurNAc either imported from the medium or derived from its own cell wall murein, and thus plays a role in cell wall recycling. The polypeptide is Anhydro-N-acetylmuramic acid kinase (Albidiferax ferrireducens (strain ATCC BAA-621 / DSM 15236 / T118) (Rhodoferax ferrireducens)).